The sequence spans 24 residues: Lactadherin (24 aa).

It is found in the membrane. The protein localises to the secreted. Its subcellular location is the cytoplasmic vesicle. The protein resides in the secretory vesicle. It localises to the acrosome membrane. In terms of biological role, specific ligand for the alpha-v/beta-3 and alpha-v/beta-5 receptors. Also binds to phosphatidylserine-enriched cell surfaces in a receptor-independent manner. Zona pellucida-binding protein which may play a role in gamete interaction. Contributes to phagocytic removal of apoptotic cells in many tissues. Plays an important role in the maintenance of intestinal epithelial homeostasis and the promotion of mucosal healing. Promotes VEGF-dependent neovascularization. The polypeptide is Lactadherin (Equus asinus (Donkey)).